The primary structure comprises 331 residues: XylDLEGF operon transcriptional activator 3 (331 aa).

The 102-residue stretch at 214–315 (ERVVQFIEDN…GELPSDTLRR (102 aa)) folds into the HTH araC/xylS-type domain. 2 consecutive DNA-binding regions (H-T-H motif) follow at residues 231–252 (ERLAELALMSPRSLYTLFEKHA) and 282–305 (VTEMALDYGFFHTGRFAENYRSTF).

Its subcellular location is the cytoplasm. Functionally, regulatory protein of the TOL plasmid xyl operons. XylS activates the xylXYZLTEGFJQKIH operon required for the degradation of toluene, m-xylene and p-xylene. The chain is XylDLEGF operon transcriptional activator 3 (xylS3) from Pseudomonas putida (Arthrobacter siderocapsulatus).